The sequence spans 207 residues: Holliday junction branch migration complex subunit RuvA (207 aa).

The tract at residues 1–64 is domain I; that stretch reads MIGRLTGILA…ETSQQLFGFS (64 aa). The domain II stretch occupies residues 65-142; it reads SQQDRELFRM…ALDTTPSEHS (78 aa). Positions 143 to 157 are flexible linker; sequence PTGEGAGIVRVDPVI. The tract at residues 158-207 is domain III; sequence NTNVIIADAESALIGLGYKPTEAAKAVSAAYNDTITTSEDLIRAALKGMI.

This sequence belongs to the RuvA family. Homotetramer. Forms an RuvA(8)-RuvB(12)-Holliday junction (HJ) complex. HJ DNA is sandwiched between 2 RuvA tetramers; dsDNA enters through RuvA and exits via RuvB. An RuvB hexamer assembles on each DNA strand where it exits the tetramer. Each RuvB hexamer is contacted by two RuvA subunits (via domain III) on 2 adjacent RuvB subunits; this complex drives branch migration. In the full resolvosome a probable DNA-RuvA(4)-RuvB(12)-RuvC(2) complex forms which resolves the HJ.

Its subcellular location is the cytoplasm. Its function is as follows. The RuvA-RuvB-RuvC complex processes Holliday junction (HJ) DNA during genetic recombination and DNA repair, while the RuvA-RuvB complex plays an important role in the rescue of blocked DNA replication forks via replication fork reversal (RFR). RuvA specifically binds to HJ cruciform DNA, conferring on it an open structure. The RuvB hexamer acts as an ATP-dependent pump, pulling dsDNA into and through the RuvAB complex. HJ branch migration allows RuvC to scan DNA until it finds its consensus sequence, where it cleaves and resolves the cruciform DNA. The protein is Holliday junction branch migration complex subunit RuvA of Saccharophagus degradans (strain 2-40 / ATCC 43961 / DSM 17024).